The primary structure comprises 265 residues: MSRIDDTFARLSETGGKAFVAYMMGCDPDFDTSLQIMRGLPGAGVDIIELGMPFTDPMADGATIQAAGQRALAAGGSVSRVLDMVRAFRRDDDATPIVLMGYYNPIYARQGGVDRFITEAVEAGVDGLIVVDLPPEEDAELCLPAREAGLNFIRLATPTTDDRRLPAVVRNTSGFVYYVSVTGITGGPAANAAEVAPEVARIRAAAKLPVVVGFGISTPEAAQAVAGVADGCVVGSAIVKLIGEGRPVPEILSFVADLAQGAHSA.

Active-site proton acceptor residues include E49 and D60.

This sequence belongs to the TrpA family. Tetramer of two alpha and two beta chains.

It carries out the reaction (1S,2R)-1-C-(indol-3-yl)glycerol 3-phosphate + L-serine = D-glyceraldehyde 3-phosphate + L-tryptophan + H2O. It functions in the pathway amino-acid biosynthesis; L-tryptophan biosynthesis; L-tryptophan from chorismate: step 5/5. Functionally, the alpha subunit is responsible for the aldol cleavage of indoleglycerol phosphate to indole and glyceraldehyde 3-phosphate. In Paracoccus denitrificans (strain Pd 1222), this protein is Tryptophan synthase alpha chain.